An 89-amino-acid chain; its full sequence is HssA/B-like protein 16 (89 aa).

This sequence belongs to the hssA/B family.

The polypeptide is HssA/B-like protein 16 (hssl16) (Dictyostelium discoideum (Social amoeba)).